Reading from the N-terminus, the 203-residue chain is Outer-membrane lipoprotein carrier protein (203 aa).

Residues 1-21 form the signal peptide; it reads MKKLAITCALLSGMVVSQVWA. Residues 184–203 are disordered; it reads DASKFTFTPPKGVTVDDQRK.

This sequence belongs to the LolA family. In terms of assembly, monomer.

The protein resides in the periplasm. Its function is as follows. Participates in the translocation of lipoproteins from the inner membrane to the outer membrane. Only forms a complex with a lipoprotein if the residue after the N-terminal Cys is not an aspartate (The Asp acts as a targeting signal to indicate that the lipoprotein should stay in the inner membrane). The chain is Outer-membrane lipoprotein carrier protein from Klebsiella pneumoniae (strain 342).